Reading from the N-terminus, the 222-residue chain is (4-{4-[2-(gamma-L-glutamylamino)ethyl]phenoxymethyl}furan-2-yl)methanamine synthase (222 aa).

It belongs to the MfnF family.

The enzyme catalyses gamma-L-glutamyltyramine + [5-(aminomethyl)furan-3-yl]methyl diphosphate = (4-{4-[2-(gamma-L-glutamylamino)ethyl]phenoxymethyl}furan-2-yl)methanamine + diphosphate. It participates in cofactor biosynthesis; methanofuran biosynthesis. Functionally, catalyzes the condensation between 5-(aminomethyl)-3-furanmethanol diphosphate (F1-PP) and gamma-glutamyltyramine to produce APMF-Glu. The chain is (4-{4-[2-(gamma-L-glutamylamino)ethyl]phenoxymethyl}furan-2-yl)methanamine synthase from Methanococcus vannielii.